The sequence spans 278 residues: Achaete-scute homolog 5 (278 aa).

Residues 1–66 (MPMGAAERGA…GPFGGGLALG (66 aa)) are disordered. One can recognise a bHLH domain in the interval 155–207 (AFIQKRNERERQRVKCVNEGYARLRGHLPGALAEKRLSKVETLRAAIRYIKYL). The disordered stretch occupies residues 214 to 278 (APDGSTPPAS…PFLESEESWH (65 aa)). A compositionally biased stretch (pro residues) spans 230–239 (GPCPAPPATP). The segment covering 240–249 (RPDRPGDGEA) has biased composition (basic and acidic residues). Low complexity predominate over residues 252 to 271 (PSSLVPESSESSCFSPSPFL).

Interacts with transcription factor TCF3/E12.

The protein resides in the nucleus. Transcription factor. Probably binds E-box motifs 5'-CANNTG-3' in complex with transcription factor TCF3/E12. Negatively modulates transcription of target genes such as CDH1/E-cadherin, perhaps by recruiting the PRC2 repressive complex to regulatory elements. Regulates ameloblast development and tooth germ growth, perhaps acting by positively modulating migration of inner enamel epithelium (IEE) cells. Plays a role in enamel formation. This Homo sapiens (Human) protein is Achaete-scute homolog 5 (ASCL5).